The following is a 93-amino-acid chain: Alpha-defensin 3 (93 aa).

The first 16 residues, 1–16 (MKTLVLLSALVLLAFQ), serve as a signal peptide directing secretion. Residues 17 to 58 (VQADPIQNTDEETKTEEQPGEDDQAVSVSFGDPEGSSLQEES) constitute a propeptide that is removed on maturation. Positions 22–56 (IQNTDEETKTEEQPGEDDQAVSVSFGDPEGSSLQE) are disordered. Cystine bridges form between C64–C92, C66–C81, and C71–C91.

Belongs to the alpha-defensin family. Paneth cells of the small bowel.

The protein localises to the secreted. Probably contributes to the antimicrobial barrier function of the small bowel mucosa. In Mus musculus (Mouse), this protein is Alpha-defensin 3 (Defa3).